Consider the following 302-residue polypeptide: MANRATSAFLDNPHPVGVNYVDEGSRQFVAVAELLASKLIASSRESDESNSDVPFVQAYSKFADDNPRHLRVKTGGKMANALTNVIRSYYSINAPAIVPQVEIDRLASKATVSGDMYNSYAVFNSVPIVEVLSPAQTTVSIVGSDRADVTMLNTGAGAANITFNFGQIAETVILKGSVPFQLARANQPMPAARFTYKLRPLDGPFIVVLPVGNPLVISATAATRIQVPLAFNKALVESGFQTAMNDGLFDAQNVNYYSSFDEFIIAQYHALDGINRVSTCVVLGLALQAYDQMRRALPVRRV.

The protein resides in the virion. Its function is as follows. Self assembles to form an icosahedral capsid with a T=13 symmetry, which consists of 230 trimers, with channels at each of its five-fold vertices. In Banna virus (BAV), this protein is Intermediate capsid protein VP8 (Segment-8).